The following is a 205-amino-acid chain: MATIFDILNTLNNNNNNKNYFESCKRQRTNNKTNKTIIDILPPMDVTMTNDKLIIETELAGISKDDIEISINDSILTIQGEKKKNLNKQLIIEKSSSSPSLLDTKEDEASIEEFDEDDIKPKSTETTSTLSNSKENKKDENKSKSTEKKFISERSFGNFKRYLDLTKFLYQLDLNSINTQFENGLLTITINKKLHYSNTIKININ.

One can recognise a sHSP domain in the interval 35 to 205 (KTIIDILPPM…YSNTIKININ (171 aa)). The disordered stretch occupies residues 99–147 (PSLLDTKEDEASIEEFDEDDIKPKSTETTSTLSNSKENKKDENKSKSTE). Over residues 109 to 118 (ASIEEFDEDD) the composition is skewed to acidic residues. A compositionally biased stretch (basic and acidic residues) spans 134–147 (KENKKDENKSKSTE).

The protein belongs to the small heat shock protein (HSP20) family.

This Dictyostelium discoideum (Social amoeba) protein is Small heat shock protein hspG12 (hspG12).